Reading from the N-terminus, the 309-residue chain is Probable nitrogen assimilation transcriptional activator (309 aa).

Positions 1–57 (MRLEQLQAFLKVAELGSFQQAALQSEVTQSTISRQIQGLESALKCQLFHRGAQAKLT) constitute an HTH lysR-type domain. Positions 18-38 (FQQAALQSEVTQSTISRQIQG) form a DNA-binding region, H-T-H motif.

The protein belongs to the LysR transcriptional regulatory family.

Its function is as follows. Seems to regulate utilization of fixed nitrogen by controlling the expression of a certain gene(s) involved in nitrogen metabolism. In Synechocystis sp. (strain ATCC 27184 / PCC 6803 / Kazusa), this protein is Probable nitrogen assimilation transcriptional activator (ntcB).